A 61-amino-acid chain; its full sequence is Sperm protamine P1 (61 aa).

Residues methionine 1–tyrosine 61 form a disordered region.

Belongs to the protamine P1 family. Testis.

The protein localises to the nucleus. It is found in the chromosome. Functionally, protamines substitute for histones in the chromatin of sperm during the haploid phase of spermatogenesis. They compact sperm DNA into a highly condensed, stable and inactive complex. This chain is Sperm protamine P1 (PRM1), found in Macropus giganteus (Eastern gray kangaroo).